A 262-amino-acid chain; its full sequence is Nodulation protein J (262 aa).

Residues Ala33 to Arg259 form the ABC transmembrane type-2 domain. Helical transmembrane passes span Ile35–Met55, Gly62–Ser82, Ala102–Ala122, Leu127–Leu147, Leu148–Val168, Tyr177–Phe197, and Leu231–Leu251.

The protein belongs to the ABC-2 integral membrane protein family. Lipooligosaccharide exporter (TC 3.A.1.102) subfamily. The complex is composed of two ATP-binding proteins (NodI) and two transmembrane proteins (NodJ).

The protein resides in the cell inner membrane. Part of the ABC transporter complex NodIJ involved in the export of the nodulation factors (Nod factors), the bacterial signal molecules that induce symbiosis and subsequent nodulation induction. Nod factors are LCO (lipo-chitin oligosaccharide), a modified beta-1,4-linked N-acetylglucosamine oligosaccharide. This subunit encodes the transporter. The protein is Nodulation protein J (nodJ) of Rhizobium meliloti (strain 1021) (Ensifer meliloti).